The primary structure comprises 352 residues: GTPase Obg (352 aa).

Residues 1–159 form the Obg domain; that stretch reads MSFIDEAKVF…FPIFMQLKVL (159 aa). The 168-residue stretch at 160-327 folds into the OBG-type G domain; it reads SDIGIIGMPN…VMLYEMLQKD (168 aa). GTP-binding positions include 166–173, 191–195, 212–215, 279–282, and 308–310; these read GMPNAGKS, FTTLE, DIPG, NKCD, and SLD. The Mg(2+) site is built by Ser-173 and Thr-193.

The protein belongs to the TRAFAC class OBG-HflX-like GTPase superfamily. OBG GTPase family. Monomer. It depends on Mg(2+) as a cofactor.

It is found in the cytoplasm. An essential GTPase which binds GTP, GDP and possibly (p)ppGpp with moderate affinity, with high nucleotide exchange rates and a fairly low GTP hydrolysis rate. Plays a role in control of the cell cycle, stress response, ribosome biogenesis and in those bacteria that undergo differentiation, in morphogenesis control. This is GTPase Obg from Anaplasma phagocytophilum (strain HZ).